The following is a 680-amino-acid chain: Oligopeptidase A (680 aa).

Residue His-469 participates in Zn(2+) binding. Glu-470 is an active-site residue. 2 residues coordinate Zn(2+): His-473 and His-476.

It belongs to the peptidase M3 family. Zn(2+) is required as a cofactor.

It catalyses the reaction Hydrolysis of oligopeptides, with broad specificity. Gly or Ala commonly occur as P1 or P1' residues, but more distant residues are also important, as is shown by the fact that Z-Gly-Pro-Gly-|-Gly-Pro-Ala is cleaved, but not Z-(Gly)(5).. May play a specific role in the degradation of signal peptides after they are released from precursor forms of secreted proteins. Can cleave N-acetyl-L-Ala(4). The polypeptide is Oligopeptidase A (prlC) (Escherichia coli (strain K12)).